Consider the following 219-residue polypeptide: 2-phospho-L-lactate guanylyltransferase (219 aa).

Belongs to the CofC family. In terms of assembly, homodimer.

The catalysed reaction is (2S)-2-phospholactate + GTP + H(+) = (2S)-lactyl-2-diphospho-5'-guanosine + diphosphate. Its pathway is cofactor biosynthesis; coenzyme F420 biosynthesis. Its function is as follows. Guanylyltransferase that catalyzes the activation of (2S)-2-phospholactate (2-PL) as (2S)-lactyl-2-diphospho-5'-guanosine, via the condensation of 2-PL with GTP. It is involved in the biosynthesis of coenzyme F420, a hydride carrier cofactor. The polypeptide is 2-phospho-L-lactate guanylyltransferase (Methanocella arvoryzae (strain DSM 22066 / NBRC 105507 / MRE50)).